We begin with the raw amino-acid sequence, 1413 residues long: Zinc finger SWIM domain-containing protein 8 (1413 aa).

Residues Ser36, Ser48, and Ser53 each carry the phosphoserine modification. The disordered stretch occupies residues Arg45–Gly65. Gly residues predominate over residues Thr55 to Gly65. An SWIM-type zinc finger spans residues Tyr172–Ile208. The interval Glu600–Gln817 is disordered. Polar residues predominate over residues His604–Ser625. Gly residues predominate over residues Ser704 to Ser715. Thr724 carries the post-translational modification Phosphothreonine. Residues Ile729 to Leu744 show a composition bias toward polar residues. Phosphoserine is present on residues Ser738, Ser741, and Ser745. Low complexity predominate over residues Gly759–Ala794. Residues Lys795–Ala811 are compositionally biased toward basic and acidic residues. Ser852 and Ser1412 each carry phosphoserine.

It belongs to the ZSWIM8 family. In terms of assembly, component of the SCF-like E3 ubiquitin-protein ligase complex which contains CUL3, RBX1, ELOB, ELOC and ZSWIM8. Interacts with DAB1.

The protein resides in the cytoplasm. It localises to the cytosol. Its pathway is protein modification; protein ubiquitination. Its function is as follows. Substrate recognition component of a SCF-like E3 ubiquitin-protein ligase complex that promotes target-directed microRNA degradation (TDMD), a process that mediates degradation of microRNAs (miRNAs). The SCF-like E3 ubiquitin-protein ligase complex acts by catalyzing ubiquitination and subsequent degradation of AGO proteins (AGO1, AGO2, AGO3 and/or AGO4), thereby exposing miRNAs for degradation. Specifically recognizes and binds AGO proteins when they are engaged with a TDMD target. May also acts as a regulator of axon guidance: specifically recognizes misfolded ROBO3 and promotes its ubiquitination and subsequent degradation. Plays an essential role for proper embryonic development of heart and lung. Controls protein quality of DAB1, a key signal molecule for brain development, thus protecting its signaling strength. Mechanistically, recognizes intrinsically disordered regions of DAB1 and eliminates misfolded DAB1 that cannot be properly phosphorylated. This is Zinc finger SWIM domain-containing protein 8 from Bos taurus (Bovine).